A 200-amino-acid chain; its full sequence is ATP-dependent Clp protease proteolytic subunit 2 (200 aa).

Ser99 acts as the Nucleophile in catalysis. Residue His124 is part of the active site.

It belongs to the peptidase S14 family. Fourteen ClpP subunits assemble into 2 heptameric rings which stack back to back to give a disk-like structure with a central cavity, resembling the structure of eukaryotic proteasomes.

Its subcellular location is the cytoplasm. It carries out the reaction Hydrolysis of proteins to small peptides in the presence of ATP and magnesium. alpha-casein is the usual test substrate. In the absence of ATP, only oligopeptides shorter than five residues are hydrolyzed (such as succinyl-Leu-Tyr-|-NHMec, and Leu-Tyr-Leu-|-Tyr-Trp, in which cleavage of the -Tyr-|-Leu- and -Tyr-|-Trp bonds also occurs).. Its function is as follows. Cleaves peptides in various proteins in a process that requires ATP hydrolysis. Has a chymotrypsin-like activity. Plays a major role in the degradation of misfolded proteins. This Treponema denticola (strain ATCC 35405 / DSM 14222 / CIP 103919 / JCM 8153 / KCTC 15104) protein is ATP-dependent Clp protease proteolytic subunit 2.